A 401-amino-acid chain; its full sequence is L-rhamnonate dehydratase (401 aa).

Positions 29 and 55 each coordinate substrate. Asp222, Glu248, and Glu276 together coordinate Mg(2+). Residue His325 is the Proton acceptor of the active site. Glu345 is a binding site for substrate.

This sequence belongs to the mandelate racemase/muconate lactonizing enzyme family. RhamD subfamily. Homooctamer; tetramer of dimers. It depends on Mg(2+) as a cofactor.

The enzyme catalyses L-rhamnonate = 2-dehydro-3-deoxy-L-rhamnonate + H2O. Its function is as follows. Catalyzes the dehydration of L-rhamnonate to 2-keto-3-deoxy-L-rhamnonate (KDR). The chain is L-rhamnonate dehydratase from Escherichia coli O157:H7.